The chain runs to 406 residues: CRISP/Allergen/PR-1 (406 aa).

The first 18 residues, 1–18 (MHFQVILMMMWLWLEAEG), serve as a signal peptide directing secretion. Residue asparagine 39 is glycosylated (N-linked (GlcNAc...) asparagine). Positions 58–205 (LREHNKLRSR…TFKDLYTCNY (148 aa)) constitute an SCP domain.

Belongs to the CRISP family. Contains 9 disulfide bonds. Expressed by the venom gland.

The protein resides in the secreted. The polypeptide is CRISP/Allergen/PR-1 (Trittame loki (Brush-footed trapdoor spider)).